The following is a 376-amino-acid chain: MTDLFKPLPEPPTELGRLRVLSKTAGIRVSPLILGGASIGDAWSGFMGSMNKEQAFELLDAFYEAGGNCIDTANSYQNEESEIWIGEWMASRKLRDQIVIATKFTGDYKKYEVGGGKSANYCGNHKRSLHVSVRDSLRKLQTDWIDILYIHWWDYMSSIEEVMDSLHILVQQGKVLYLGVSDTPAWVVSAANYYATSHGKTPFSVYQGKWNVLNRDFERDIIPMARHFGMALAPWDVMGGGRFQSKKAMEERKKNGEGLRTFVGGPEQTELEVKISEALTKIAEEHGTESVTAIAIAYVRSKAKNVFPLIGGRKIEHLKQNIEALSIKLTPEQIEYLESIVPFDVGFPKSLIGDDPAVTKKLSPLTSMSARIAFDN.

Tyr76 acts as the Proton donor in catalysis. His151 contributes to the substrate binding site. 236–246 (DVMGGGRFQSK) contributes to the NADP(+) binding site.

The protein belongs to the aldo/keto reductase family. Aldo/keto reductase 2 subfamily.

The polypeptide is Putative aryl-alcohol dehydrogenase AAD14 (AAD14) (Saccharomyces cerevisiae (strain ATCC 204508 / S288c) (Baker's yeast)).